A 445-amino-acid chain; its full sequence is Xylose isomerase (445 aa).

Catalysis depends on residues His-107 and Asp-110. Mg(2+)-binding residues include Glu-238, Glu-274, His-277, Asp-302, Asp-313, Asp-315, and Asp-345.

This sequence belongs to the xylose isomerase family. As to quaternary structure, homotetramer. Requires Mg(2+) as cofactor.

The protein localises to the cytoplasm. It catalyses the reaction alpha-D-xylose = alpha-D-xylulofuranose. This Bacillus velezensis (strain DSM 23117 / BGSC 10A6 / LMG 26770 / FZB42) (Bacillus amyloliquefaciens subsp. plantarum) protein is Xylose isomerase.